Consider the following 367-residue polypeptide: Nociceptin receptor (367 aa).

The Extracellular segment spans residues 1–45 (MESLFPAPFWEVLYGSHFQGNLSLLNETVPHHLLLNASHSAFLPL). N-linked (GlcNAc...) asparagine glycosylation is found at Asn-21, Asn-26, and Asn-36. Residues 46-71 (GLKVTIVGLYLAVCIGGLLGNCLVMY) form a helical membrane-spanning segment. Over 72 to 84 (VILRHTKMKTATN) the chain is Cytoplasmic. A helical membrane pass occupies residues 85–106 (IYIFNLALADTLVLLTLPFQGT). At 107 to 121 (DILLGFWPFGNALCK) the chain is on the extracellular side. Cys-120 and Cys-197 are oxidised to a cystine. A helical membrane pass occupies residues 122–143 (TVIAIDYYNMFTSTFTLTAMSV). Residues 144 to 162 (DRYVAICHPIRALDVRTSS) are Cytoplasmic-facing. A helical transmembrane segment spans residues 163–185 (KAQAVNVAIWALASVVGVPVAIM). Residues 186 to 208 (GSAQVEDEEIECLVEIPAPQDYW) lie on the Extracellular side of the membrane. A helical membrane pass occupies residues 209–233 (GPVFAICIFLFSFIIPVLIISVCYS). The Cytoplasmic segment spans residues 234-261 (LMIRRLRGVRLLSGSREKDRNLRRITRL). The helical transmembrane segment at 262–282 (VLVVVAVFVGCWTPVQVFVLV) threads the bilayer. Residues 283–297 (QGLGVQPGSETAVAI) lie on the Extracellular side of the membrane. A helical transmembrane segment spans residues 298 to 319 (LRFCTALGYVNSCLNPILYAFL). Residues 320-367 (DENFKACFRKFCCASALHREMQVSDRVRSIAKDVGLGCKTSETVPRPA) are Cytoplasmic-facing. Residue Cys-331 is the site of S-palmitoyl cysteine attachment.

Belongs to the G-protein coupled receptor 1 family. Post-translationally, phosphorylation at Ser-360 requires GRK3. In terms of tissue distribution, in the brain, isoform KOR3 and isoform KOR3C are most abundant in hypothalamus and periaqueductal gray. Isoform KOR3A is highly expressed in cortex, striatum and brainstem. Isoform KOR3D is highly expressed in cerebellum, hypothalamus and brainstem. Detected in spleen lymphocytes.

Its subcellular location is the cell membrane. The protein resides in the cytoplasmic vesicle. Functionally, G-protein coupled opioid receptor that functions as a receptor for the endogenous neuropeptide nociceptin. Ligand binding causes a conformation change that triggers signaling via guanine nucleotide-binding proteins (G proteins) and modulates the activity of down-stream effectors. Signaling via G proteins mediates inhibition of adenylate cyclase activity and calcium channel activity. Arrestins modulate signaling via G proteins and mediate the activation of alternative signaling pathways that lead to the activation of MAP kinases. Plays a role in modulating nociception and the perception of pain. Plays a role in the regulation of locomotor activity by the neuropeptide nociceptin. The chain is Nociceptin receptor (Oprl1) from Mus musculus (Mouse).